A 504-amino-acid chain; its full sequence is AMP phosphorylase (504 aa).

AMP is bound by residues G169, S195–S200, and T204. The Proton donor role is filled by D257. AMP-binding residues include S265 and K289.

This sequence belongs to the thymidine/pyrimidine-nucleoside phosphorylase family. Type 2 subfamily.

The catalysed reaction is AMP + phosphate = alpha-D-ribose 1,5-bisphosphate + adenine. It catalyses the reaction CMP + phosphate = cytosine + alpha-D-ribose 1,5-bisphosphate. It carries out the reaction UMP + phosphate = alpha-D-ribose 1,5-bisphosphate + uracil. Its function is as follows. Catalyzes the conversion of AMP and phosphate to adenine and ribose 1,5-bisphosphate (R15P). Exhibits phosphorylase activity toward CMP and UMP in addition to AMP. Functions in an archaeal AMP degradation pathway, together with R15P isomerase and RubisCO. This Methanococcus aeolicus (strain ATCC BAA-1280 / DSM 17508 / OCM 812 / Nankai-3) protein is AMP phosphorylase.